The primary structure comprises 702 residues: Polyribonucleotide nucleotidyltransferase (702 aa).

The Mg(2+) site is built by Asp485 and Asp491. The region spanning Pro552–Ile611 is the KH domain. The 69-residue stretch at Gly621–Lys689 folds into the S1 motif domain.

This sequence belongs to the polyribonucleotide nucleotidyltransferase family. Mg(2+) serves as cofactor.

The protein localises to the cytoplasm. It carries out the reaction RNA(n+1) + phosphate = RNA(n) + a ribonucleoside 5'-diphosphate. Involved in mRNA degradation. Catalyzes the phosphorolysis of single-stranded polyribonucleotides processively in the 3'- to 5'-direction. In Clostridium perfringens (strain SM101 / Type A), this protein is Polyribonucleotide nucleotidyltransferase.